The chain runs to 109 residues: Nucleoid-associated protein BCE_0021 (109 aa).

This sequence belongs to the YbaB/EbfC family. Homodimer.

The protein localises to the cytoplasm. The protein resides in the nucleoid. In terms of biological role, binds to DNA and alters its conformation. May be involved in regulation of gene expression, nucleoid organization and DNA protection. The polypeptide is Nucleoid-associated protein BCE_0021 (Bacillus cereus (strain ATCC 10987 / NRS 248)).